A 481-amino-acid chain; its full sequence is Adenosylhomocysteinase (481 aa).

Substrate contacts are provided by threonine 65, aspartate 140, and glutamate 200. Residue 201–203 (TTT) participates in NAD(+) binding. Substrate contacts are provided by lysine 230 and aspartate 234. NAD(+) contacts are provided by residues asparagine 235, 264-269 (GYGDVG), glutamate 287, asparagine 322, 343-345 (IGH), and asparagine 393.

This sequence belongs to the adenosylhomocysteinase family. The cofactor is NAD(+).

It is found in the cytoplasm. The enzyme catalyses S-adenosyl-L-homocysteine + H2O = L-homocysteine + adenosine. Its pathway is amino-acid biosynthesis; L-homocysteine biosynthesis; L-homocysteine from S-adenosyl-L-homocysteine: step 1/1. In terms of biological role, may play a key role in the regulation of the intracellular concentration of adenosylhomocysteine. In Polynucleobacter asymbioticus (strain DSM 18221 / CIP 109841 / QLW-P1DMWA-1) (Polynucleobacter necessarius subsp. asymbioticus), this protein is Adenosylhomocysteinase.